The sequence spans 443 residues: ATP-dependent protease ATPase subunit HslU (443 aa).

ATP is bound by residues isoleucine 18 and glycine 60–glutamate 65. The tract at residues proline 138–phenylalanine 158 is disordered. Basic and acidic residues predominate over residues tryptophan 143–threonine 154. Residues aspartate 255, glutamate 321, and arginine 393 each coordinate ATP.

This sequence belongs to the ClpX chaperone family. HslU subfamily. In terms of assembly, a double ring-shaped homohexamer of HslV is capped on each side by a ring-shaped HslU homohexamer. The assembly of the HslU/HslV complex is dependent on binding of ATP.

It localises to the cytoplasm. In terms of biological role, ATPase subunit of a proteasome-like degradation complex; this subunit has chaperone activity. The binding of ATP and its subsequent hydrolysis by HslU are essential for unfolding of protein substrates subsequently hydrolyzed by HslV. HslU recognizes the N-terminal part of its protein substrates and unfolds these before they are guided to HslV for hydrolysis. In Pseudoalteromonas atlantica (strain T6c / ATCC BAA-1087), this protein is ATP-dependent protease ATPase subunit HslU.